The chain runs to 570 residues: Zinc finger and BTB domain-containing protein 44 (570 aa).

Residue Lys4 forms a Glycyl lysine isopeptide (Lys-Gly) (interchain with G-Cter in SUMO2) linkage. The BTB domain maps to 31 to 98 (CDITIRVQDK…AYTATLSINT (68 aa)). 6 positions are modified to phosphoserine: Ser135, Ser159, Ser161, Ser165, Ser191, and Ser194. Disordered stretches follow at residues 194 to 220 (SPVK…NRNQ) and 243 to 267 (EKVK…RRMA). The span at 199-220 (GTQTSSPQVLNSSASYSENRNQ) shows a compositional bias: polar residues. Thr200 is subject to Phosphothreonine. Lys290 participates in a covalent cross-link: Glycyl lysine isopeptide (Lys-Gly) (interchain with G-Cter in SUMO2). Residues 295-369 (SDEEVHEEVS…NAPPDDDDRL (75 aa)) form a disordered region. Residues 304 to 318 (SQPVSASQSSLSDQQ) are compositionally biased toward low complexity. The segment covering 352 to 361 (TLQSTSSTNA) has biased composition (polar residues). C2H2-type zinc fingers lie at residues 399–421 (FQCP…MLIH), 427–449 (FQCD…RLKH), 455–479 (FRCQ…VSRH), and 487–511 (YECK…SLNH).

Its subcellular location is the nucleus. May be involved in transcriptional regulation. The chain is Zinc finger and BTB domain-containing protein 44 (ZBTB44) from Homo sapiens (Human).